The chain runs to 700 residues: UvrABC system protein B (700 aa).

The Helicase ATP-binding domain occupies 26–183 (SGLHRGDRIQ…RALVGIQYLR (158 aa)). ATP is bound at residue 39 to 46 (GVTGSGKT). Positions 92-115 (YYDYYQPEAYVPSSDTYIEKDASI) match the Beta-hairpin motif. One can recognise a Helicase C-terminal domain in the interval 430–596 (QVDDLLHEIR…GVTKSVDEVR (167 aa)). A disordered region spans residues 608-627 (REGEAPAPRRLASESAPRSR). Residues 631–666 (ETLVGELEIAMREAAVALDFEAAARLRDQLFEVRTA) form the UVR domain. Residues 667-700 (LGQAPSEARGNAQAPKRPPGSAPQRRAGGGRRGR) form a disordered region.

The protein belongs to the UvrB family. As to quaternary structure, forms a heterotetramer with UvrA during the search for lesions. Interacts with UvrC in an incision complex.

Its subcellular location is the cytoplasm. In terms of biological role, the UvrABC repair system catalyzes the recognition and processing of DNA lesions. A damage recognition complex composed of 2 UvrA and 2 UvrB subunits scans DNA for abnormalities. Upon binding of the UvrA(2)B(2) complex to a putative damaged site, the DNA wraps around one UvrB monomer. DNA wrap is dependent on ATP binding by UvrB and probably causes local melting of the DNA helix, facilitating insertion of UvrB beta-hairpin between the DNA strands. Then UvrB probes one DNA strand for the presence of a lesion. If a lesion is found the UvrA subunits dissociate and the UvrB-DNA preincision complex is formed. This complex is subsequently bound by UvrC and the second UvrB is released. If no lesion is found, the DNA wraps around the other UvrB subunit that will check the other stand for damage. This chain is UvrABC system protein B, found in Gemmatimonas aurantiaca (strain DSM 14586 / JCM 11422 / NBRC 100505 / T-27).